The primary structure comprises 156 residues: Small ribosomal subunit protein uS7 (156 aa).

This sequence belongs to the universal ribosomal protein uS7 family. As to quaternary structure, part of the 30S ribosomal subunit. Contacts proteins S9 and S11.

Its function is as follows. One of the primary rRNA binding proteins, it binds directly to 16S rRNA where it nucleates assembly of the head domain of the 30S subunit. Is located at the subunit interface close to the decoding center, probably blocks exit of the E-site tRNA. The sequence is that of Small ribosomal subunit protein uS7 from Aromatoleum aromaticum (strain DSM 19018 / LMG 30748 / EbN1) (Azoarcus sp. (strain EbN1)).